The primary structure comprises 752 residues: Protein GCN20 (752 aa).

An N-acetylalanine modification is found at A2. 2 ABC transporter domains span residues 199–464 and 532–748; these read IHID…RKNA and IQLQ…AAGV. Residues 232 to 239 and 565 to 572 contribute to the ATP site; these read GQNGIGKS and GANGCGKT.

Belongs to the ABC transporter superfamily. ABCF family. EF3 subfamily. As to quaternary structure, interacts (via N-terminus) with GCN1 (via C-terminus); this interaction stimulates GCN2 kinase activity in response to amino acid starvation. The GCN1-GCN20 complex interacts with GCN2 on translating ribosomes in amino acid-starved cells; this association stimulates GCN2 kinase activation by uncharged tRNAs, and hence allowing GCN4 translational activation and derepression of amino acid biosynthetic genes. Associates with ribosomes.

In terms of biological role, acts as a positive activator of the GCN2 protein kinase activity in response to in response to low amino acid, carbon, or purine availability. Component of the GCN1-GCN20 complex that forms a complex with GCN2 on translating ribosomes; during this process, GCN20 helps GCN1 to act as a chaperone to facilitate delivery of uncharged tRNAs that enter the A site of ribosomes to the tRNA-binding domain of GCN2, and hence stimulating GCN2 kinase activity. Participates in gene-specific mRNA translation activation, such as the transcriptional activator GCN4, by promoting the GCN2-mediated phosphorylation of eukaryotic translation initiation factor 2 (eIF-2-alpha/SUI2) on 'Ser-52', and hence allowing GCN4-mediated reprogramming of amino acid biosynthetic gene expression to alleviate nutrient depletion. This Saccharomyces cerevisiae (strain ATCC 204508 / S288c) (Baker's yeast) protein is Protein GCN20.